Consider the following 455-residue polypeptide: Probable xyloglucan galactosyltransferase GT17 (455 aa).

Residues 1 to 34 (MTFNKRQVKINHWPEKNDKEKQKYSKNRETVKLT) are Cytoplasmic-facing. Residues 35–55 (LLTLLLLCSICFLFLTLNFPF) traverse the membrane as a helical; Signal-anchor for type II membrane protein segment. The Lumenal portion of the chain corresponds to 56–455 (TIEFTASIPR…QARDNVVVSL (400 aa)). N-linked (GlcNAc...) asparagine glycans are attached at residues N70, N169, N230, N390, and N426.

Belongs to the glycosyltransferase 47 family. Expressed in roots and hypocotyls.

Its subcellular location is the golgi apparatus membrane. Functionally, functions in xyloglucan synthesis by adding side chains to the xylosylated glucan backbone. Involved in the galactosylation of hemicellulose xyloglucan. This chain is Probable xyloglucan galactosyltransferase GT17, found in Arabidopsis thaliana (Mouse-ear cress).